The sequence spans 296 residues: Telomere repeat-binding factor 4 (296 aa).

Residues 1 to 62 (MGNQKLKWTA…WRNLSVAPGI (62 aa)) form the HTH myb-type domain. A DNA-binding region (H-T-H motif) is located at residues 28–58 (WKNILRDPELAEQLSSRSNIDLKDKWRNLSV). Residues 126–200 (NAPRYDGMIF…STQNFYKMND (75 aa)) enclose the H15 domain. Residues 197–232 (KMNDNSLVQRTPHVARPKESNTKSRQQTNSQGPSIS) are disordered. Positions 219–232 (KSRQQTNSQGPSIS) are enriched in polar residues. Residues 245–282 (KLVEVENKLDVSKGAAEEIERLMKLAEEADEMLVIARE) are a coiled coil.

It belongs to the histone H1/H5 family. SMH subfamily.

It localises to the nucleus. The protein localises to the chromosome. Functionally, binds preferentially double-stranded telomeric repeats. This is Telomere repeat-binding factor 4 from Arabidopsis thaliana (Mouse-ear cress).